The chain runs to 228 residues: Thymidylate kinase (228 aa).

Positions 1 to 10 (MSDSAVQRSS) are enriched in polar residues. A disordered region spans residues 1–23 (MSDSAVQRSSGRGRFITFEGGEG). 20–27 (GGEGTGKS) contributes to the ATP binding site.

This sequence belongs to the thymidylate kinase family.

The enzyme catalyses dTMP + ATP = dTDP + ADP. Its function is as follows. Phosphorylation of dTMP to form dTDP in both de novo and salvage pathways of dTTP synthesis. This chain is Thymidylate kinase, found in Bradyrhizobium diazoefficiens (strain JCM 10833 / BCRC 13528 / IAM 13628 / NBRC 14792 / USDA 110).